A 242-amino-acid polypeptide reads, in one-letter code: Pyridoxine 5'-phosphate synthase (242 aa).

Asn-6 is a binding site for 3-amino-2-oxopropyl phosphate. Position 8-9 (8-9) interacts with 1-deoxy-D-xylulose 5-phosphate; the sequence is DH. Arg-17 lines the 3-amino-2-oxopropyl phosphate pocket. His-42 serves as the catalytic Proton acceptor. Arg-44 and His-49 together coordinate 1-deoxy-D-xylulose 5-phosphate. Glu-69 acts as the Proton acceptor in catalysis. Thr-99 contributes to the 1-deoxy-D-xylulose 5-phosphate binding site. His-190 (proton donor) is an active-site residue. Residues Gly-191 and 212–213 contribute to the 3-amino-2-oxopropyl phosphate site; that span reads GH.

It belongs to the PNP synthase family. In terms of assembly, homooctamer; tetramer of dimers.

It is found in the cytoplasm. It carries out the reaction 3-amino-2-oxopropyl phosphate + 1-deoxy-D-xylulose 5-phosphate = pyridoxine 5'-phosphate + phosphate + 2 H2O + H(+). Its pathway is cofactor biosynthesis; pyridoxine 5'-phosphate biosynthesis; pyridoxine 5'-phosphate from D-erythrose 4-phosphate: step 5/5. Its function is as follows. Catalyzes the complicated ring closure reaction between the two acyclic compounds 1-deoxy-D-xylulose-5-phosphate (DXP) and 3-amino-2-oxopropyl phosphate (1-amino-acetone-3-phosphate or AAP) to form pyridoxine 5'-phosphate (PNP) and inorganic phosphate. The chain is Pyridoxine 5'-phosphate synthase from Neisseria meningitidis serogroup C.